We begin with the raw amino-acid sequence, 214 residues long: Ribosomal RNA large subunit methyltransferase E (214 aa).

5 residues coordinate S-adenosyl-L-methionine: glycine 60, tryptophan 62, aspartate 86, aspartate 102, and aspartate 127. The Proton acceptor role is filled by lysine 167.

The protein belongs to the class I-like SAM-binding methyltransferase superfamily. RNA methyltransferase RlmE family.

The protein resides in the cytoplasm. It catalyses the reaction uridine(2552) in 23S rRNA + S-adenosyl-L-methionine = 2'-O-methyluridine(2552) in 23S rRNA + S-adenosyl-L-homocysteine + H(+). Functionally, specifically methylates the uridine in position 2552 of 23S rRNA at the 2'-O position of the ribose in the fully assembled 50S ribosomal subunit. In Janthinobacterium sp. (strain Marseille) (Minibacterium massiliensis), this protein is Ribosomal RNA large subunit methyltransferase E.